A 201-amino-acid chain; its full sequence is Thymidine kinase (201 aa).

Residues serine 9 to serine 16 and aspartate 87 to histidine 90 each bind ATP. The active-site Proton acceptor is the glutamate 88. Residues cysteine 145, cysteine 147, cysteine 182, and histidine 185 each contribute to the Zn(2+) site.

Belongs to the thymidine kinase family. In terms of assembly, homotetramer.

Its subcellular location is the cytoplasm. The catalysed reaction is thymidine + ATP = dTMP + ADP + H(+). The polypeptide is Thymidine kinase (Photorhabdus laumondii subsp. laumondii (strain DSM 15139 / CIP 105565 / TT01) (Photorhabdus luminescens subsp. laumondii)).